We begin with the raw amino-acid sequence, 216 residues long: MKAYTVEQGIVAPLDRANVDTDLIIPKQFLKSIKRTGFGDNLFDELRYLDEGYPGQDNAKRPKNPDFILNQPCYASATVLIARKNFGCGSSREHAPWALNEYGFRTVIAPSFADIFFNNCFKNGMLPVILDEETVDQLFKECAASEDYQLTIDLAAQEVKTPTGEAFKFEIDPFRKHCLLNGLDDIGLTLQNAGAIREFESKAKQSRPWVFQDLKA.

It belongs to the LeuD family. LeuD type 1 subfamily. In terms of assembly, heterodimer of LeuC and LeuD.

It carries out the reaction (2R,3S)-3-isopropylmalate = (2S)-2-isopropylmalate. It functions in the pathway amino-acid biosynthesis; L-leucine biosynthesis; L-leucine from 3-methyl-2-oxobutanoate: step 2/4. In terms of biological role, catalyzes the isomerization between 2-isopropylmalate and 3-isopropylmalate, via the formation of 2-isopropylmaleate. This Acinetobacter baylyi (strain ATCC 33305 / BD413 / ADP1) protein is 3-isopropylmalate dehydratase small subunit.